The chain runs to 180 residues: ATP-dependent protease subunit HslV (180 aa).

Residue Thr5 is part of the active site. Na(+)-binding residues include Gly165, Cys168, and Thr171.

This sequence belongs to the peptidase T1B family. HslV subfamily. As to quaternary structure, a double ring-shaped homohexamer of HslV is capped on each side by a ring-shaped HslU homohexamer. The assembly of the HslU/HslV complex is dependent on binding of ATP.

Its subcellular location is the cytoplasm. The enzyme catalyses ATP-dependent cleavage of peptide bonds with broad specificity.. Its activity is regulated as follows. Allosterically activated by HslU binding. Protease subunit of a proteasome-like degradation complex believed to be a general protein degrading machinery. The sequence is that of ATP-dependent protease subunit HslV from Helicobacter pylori (strain J99 / ATCC 700824) (Campylobacter pylori J99).